A 101-amino-acid polypeptide reads, in one-letter code: Large ribosomal subunit protein bL28 (101 aa).

This sequence belongs to the bacterial ribosomal protein bL28 family.

The protein is Large ribosomal subunit protein bL28 of Rhodopseudomonas palustris (strain BisB5).